The chain runs to 225 residues: Uracil-DNA glycosylase (225 aa).

The Proton acceptor role is filled by aspartate 65.

This sequence belongs to the uracil-DNA glycosylase (UDG) superfamily. UNG family.

It localises to the cytoplasm. It catalyses the reaction Hydrolyzes single-stranded DNA or mismatched double-stranded DNA and polynucleotides, releasing free uracil.. In terms of biological role, excises uracil residues from the DNA which can arise as a result of misincorporation of dUMP residues by DNA polymerase or due to deamination of cytosine. In Bacillus thuringiensis subsp. konkukian (strain 97-27), this protein is Uracil-DNA glycosylase.